Consider the following 167-residue polypeptide: Peptide deformylase (167 aa).

Residues Cys91 and His133 each contribute to the Fe cation site. The active site involves Glu134. Position 137 (His137) interacts with Fe cation.

It belongs to the polypeptide deformylase family. Requires Fe(2+) as cofactor.

It carries out the reaction N-terminal N-formyl-L-methionyl-[peptide] + H2O = N-terminal L-methionyl-[peptide] + formate. In terms of biological role, removes the formyl group from the N-terminal Met of newly synthesized proteins. Requires at least a dipeptide for an efficient rate of reaction. N-terminal L-methionine is a prerequisite for activity but the enzyme has broad specificity at other positions. The sequence is that of Peptide deformylase from Neisseria gonorrhoeae (strain ATCC 700825 / FA 1090).